The following is a 502-amino-acid chain: 9-beta-pimara-7,15-diene oxidase (502 aa).

Helical transmembrane passes span I4–T26 and L106–W128. Residue C438 coordinates heme.

Belongs to the cytochrome P450 family. Heme is required as a cofactor.

The protein resides in the membrane. The catalysed reaction is 9beta-pimara-7,15-diene + 3 reduced [NADPH--hemoprotein reductase] + 3 O2 = 9beta-pimara-7,15-dien-19-oate + 3 oxidized [NADPH--hemoprotein reductase] + 4 H2O + 4 H(+). Involved in momilactone phytoalexins biosynthesis; acts as a multifunctional diterpene oxidase. Participates in the biosynthetic steps between 9-beta-pimara-7,15-diene and 3-beta-hydroxy-9-beta-pimara-7,15-dien-19,6-beta-olide. Also catalyzes consecutive oxidations at C19 of syn-stemod-13(17)-ene. This is 9-beta-pimara-7,15-diene oxidase (CYP99A3) from Oryza sativa subsp. japonica (Rice).